The chain runs to 68 residues: Large ribosomal subunit protein bL35 (68 aa).

The protein belongs to the bacterial ribosomal protein bL35 family.

The protein is Large ribosomal subunit protein bL35 of Wolbachia pipientis wMel.